The primary structure comprises 76 residues: Paralithocin 3 (76 aa).

An N-terminal signal peptide occupies residues 1 to 23 (MGPMKVLLVMLVVMVAAPHIADA). 4 disulfide bridges follow: cysteine 31–cysteine 62, cysteine 40–cysteine 58, cysteine 44–cysteine 56, and cysteine 49–cysteine 59. At proline 74 the chain carries Proline amide; partial.

This sequence belongs to the paralithocin family. In terms of processing, the amidated form is probably the active form.

In terms of biological role, has antibacterial activity, mainly against marine Gram-positive bacteria like C.maltaromaticum (MIC=25 uM), C.mobile (MIC=12.5 uM), C.divergens (MIC=25 uM) and C.funditum (MIC=12.5 uM) but also against C.glutamicum (MIC=12.5 uM). Has very little or no activity against Gram-negative bacteria. In Paralithodes camtschaticus (Red king crab), this protein is Paralithocin 3.